The sequence spans 310 residues: Aspartate carbamoyltransferase catalytic subunit (310 aa).

Positions 57 and 58 each coordinate carbamoyl phosphate. L-aspartate is bound at residue Lys86. The carbamoyl phosphate site is built by Arg107, His135, and Gln138. L-aspartate contacts are provided by Arg168 and Arg229. Positions 268 and 269 each coordinate carbamoyl phosphate.

The protein belongs to the aspartate/ornithine carbamoyltransferase superfamily. ATCase family. In terms of assembly, heterooligomer of catalytic and regulatory chains.

The enzyme catalyses carbamoyl phosphate + L-aspartate = N-carbamoyl-L-aspartate + phosphate + H(+). The protein operates within pyrimidine metabolism; UMP biosynthesis via de novo pathway; (S)-dihydroorotate from bicarbonate: step 2/3. Functionally, catalyzes the condensation of carbamoyl phosphate and aspartate to form carbamoyl aspartate and inorganic phosphate, the committed step in the de novo pyrimidine nucleotide biosynthesis pathway. The chain is Aspartate carbamoyltransferase catalytic subunit from Thermococcus onnurineus (strain NA1).